The chain runs to 440 residues: MTTPHATPRATTEGTVYTVTGGDWDEVVESAVKSDDERIIVNMGPQHPSTHGVLRLILEIDGETVTEARCGIGYLHTGIEKNLEFRNWTQGTTFVTRMDYLTPFFNETAYCLGVEKLLGIEDQIPDRATVLRVLLMELNRLSSHLVCIATGGMELGATTIMIYGFRDRELVLDLFELFTGLRMNHAFVRPGGLAQDLPPGAVDRLREFIKTMKKNLPEYDKLATGNPIFKARMQDVGYLDLTGCMALGATGPVLRSAGLPHDLRKSDPYCGYETYDFEVPTADTCDSYGRFLIRLEEMRQSLRIIEQCIDRLEPGPVMVADKKIAWPAQLALGPDGLGNSLDHIRNIMGTSMEALIHHFKLVTEGFRVPPGQVYTAVESPKGELGVHVVSDGGTRPYRVHFRDPSFTNLQAMAAMCEGGQVADVIVAVASIDPVMGGVDR.

It belongs to the complex I 49 kDa subunit family. NDH-1 is composed of 14 different subunits. Subunits NuoB, C, D, E, F, and G constitute the peripheral sector of the complex.

It localises to the cell membrane. The enzyme catalyses a quinone + NADH + 5 H(+)(in) = a quinol + NAD(+) + 4 H(+)(out). In terms of biological role, NDH-1 shuttles electrons from NADH, via FMN and iron-sulfur (Fe-S) centers, to quinones in the respiratory chain. The immediate electron acceptor for the enzyme in this species is believed to be a menaquinone. Couples the redox reaction to proton translocation (for every two electrons transferred, four hydrogen ions are translocated across the cytoplasmic membrane), and thus conserves the redox energy in a proton gradient. This Streptomyces griseus subsp. griseus (strain JCM 4626 / CBS 651.72 / NBRC 13350 / KCC S-0626 / ISP 5235) protein is NADH-quinone oxidoreductase subunit D 1.